The primary structure comprises 309 residues: Ornithine carbamoyltransferase (309 aa).

Carbamoyl phosphate-binding positions include 51–54 (STRT), Q78, R102, and 129–132 (HPCQ). L-ornithine is bound by residues N161, D225, and 229-230 (SM). Carbamoyl phosphate contacts are provided by residues 265 to 266 (CL) and R293.

This sequence belongs to the aspartate/ornithine carbamoyltransferase superfamily. OTCase family.

Its subcellular location is the cytoplasm. The catalysed reaction is carbamoyl phosphate + L-ornithine = L-citrulline + phosphate + H(+). The protein operates within amino-acid biosynthesis; L-arginine biosynthesis; L-arginine from L-ornithine and carbamoyl phosphate: step 1/3. Functionally, reversibly catalyzes the transfer of the carbamoyl group from carbamoyl phosphate (CP) to the N(epsilon) atom of ornithine (ORN) to produce L-citrulline. This is Ornithine carbamoyltransferase from Mycolicibacterium paratuberculosis (strain ATCC BAA-968 / K-10) (Mycobacterium paratuberculosis).